The following is a 320-amino-acid chain: L-lactate dehydrogenase (320 aa).

NAD(+) contacts are provided by residues Val18, Asp39, Arg44, Tyr69, and 83–84 (GA). Substrate is bound by residues Gln86 and Arg92. NAD(+) is bound by residues Thr105, 122-124 (AAN), and Ser147. 124 to 127 (NPVD) serves as a coordination point for substrate. Residue 152-155 (DSAR) participates in substrate binding. Residue His179 is the Proton acceptor of the active site. Tyr223 is subject to Phosphotyrosine. A substrate-binding site is contributed by Thr232.

Belongs to the LDH/MDH superfamily. LDH family. Homotetramer.

Its subcellular location is the cytoplasm. The catalysed reaction is (S)-lactate + NAD(+) = pyruvate + NADH + H(+). It participates in fermentation; pyruvate fermentation to lactate; (S)-lactate from pyruvate: step 1/1. Functionally, catalyzes the conversion of lactate to pyruvate. This Pediococcus pentosaceus (strain ATCC 25745 / CCUG 21536 / LMG 10740 / 183-1w) protein is L-lactate dehydrogenase.